The primary structure comprises 346 residues: uncharacterized protein (346 aa).

This sequence belongs to the IIV-6 359L family.

This is an uncharacterized protein from Invertebrate iridescent virus 6 (IIV-6).